The following is a 485-amino-acid chain: Probable glycine dehydrogenase (decarboxylating) subunit 2 (485 aa).

Residue Lys273 is modified to N6-(pyridoxal phosphate)lysine.

It belongs to the GcvP family. C-terminal subunit subfamily. In terms of assembly, the glycine cleavage system is composed of four proteins: P, T, L and H. In this organism, the P 'protein' is a heterodimer of two subunits. The cofactor is pyridoxal 5'-phosphate.

It carries out the reaction N(6)-[(R)-lipoyl]-L-lysyl-[glycine-cleavage complex H protein] + glycine + H(+) = N(6)-[(R)-S(8)-aminomethyldihydrolipoyl]-L-lysyl-[glycine-cleavage complex H protein] + CO2. In terms of biological role, the glycine cleavage system catalyzes the degradation of glycine. The P protein binds the alpha-amino group of glycine through its pyridoxal phosphate cofactor; CO(2) is released and the remaining methylamine moiety is then transferred to the lipoamide cofactor of the H protein. This Bacillus licheniformis (strain ATCC 14580 / DSM 13 / JCM 2505 / CCUG 7422 / NBRC 12200 / NCIMB 9375 / NCTC 10341 / NRRL NRS-1264 / Gibson 46) protein is Probable glycine dehydrogenase (decarboxylating) subunit 2.